Reading from the N-terminus, the 268-residue chain is MEMO1 family protein Ta0237 (268 aa).

The protein belongs to the MEMO1 family.

This is MEMO1 family protein Ta0237 from Thermoplasma acidophilum (strain ATCC 25905 / DSM 1728 / JCM 9062 / NBRC 15155 / AMRC-C165).